The primary structure comprises 191 residues: UPF0312 protein Sputcn32_2702 (191 aa).

Residues 1-22 (MKKQLLSALIGVSLLAPMAASA) form the signal peptide.

It belongs to the UPF0312 family. Type 1 subfamily.

It localises to the periplasm. In Shewanella putrefaciens (strain CN-32 / ATCC BAA-453), this protein is UPF0312 protein Sputcn32_2702.